We begin with the raw amino-acid sequence, 119 residues long: Immunoglobulin heavy variable 2-70 (119 aa).

The signal sequence occupies residues 1 to 19 (MDILCSTLLLLTVPSWVLS). Pyrrolidone carboxylic acid is present on Gln20. Residues 20 to 44 (QVTLRESGPALVKPTQTLTLTCTFS) are framework-1. Positions 20 to 119 (QVTLRESGPA…DTATYYCARI (100 aa)) constitute an Ig-like domain. Residues Cys41 and Cys116 are joined by a disulfide bond. Positions 45-54 (GFSLSTSGMC) are complementarity-determining-1. The tract at residues 55-71 (VSWIRQPPGKALEWLAL) is framework-2. Positions 72–78 (IDWDDDK) are complementarity-determining-2. The interval 79–116 (YYSTSLKTRLTISKDTSKNQVVLTMTNMDPVDTATYYC) is framework-3. The interval 117 to 119 (ARI) is complementarity-determining-3.

As to quaternary structure, immunoglobulins are composed of two identical heavy chains and two identical light chains; disulfide-linked.

Its subcellular location is the secreted. It localises to the cell membrane. V region of the variable domain of immunoglobulin heavy chains that participates in the antigen recognition. Immunoglobulins, also known as antibodies, are membrane-bound or secreted glycoproteins produced by B lymphocytes. In the recognition phase of humoral immunity, the membrane-bound immunoglobulins serve as receptors which, upon binding of a specific antigen, trigger the clonal expansion and differentiation of B lymphocytes into immunoglobulins-secreting plasma cells. Secreted immunoglobulins mediate the effector phase of humoral immunity, which results in the elimination of bound antigens. The antigen binding site is formed by the variable domain of one heavy chain, together with that of its associated light chain. Thus, each immunoglobulin has two antigen binding sites with remarkable affinity for a particular antigen. The variable domains are assembled by a process called V-(D)-J rearrangement and can then be subjected to somatic hypermutations which, after exposure to antigen and selection, allow affinity maturation for a particular antigen. This Homo sapiens (Human) protein is Immunoglobulin heavy variable 2-70.